The sequence spans 310 residues: Protoheme IX farnesyltransferase 2 (310 aa).

9 helical membrane passes run 25–45 (PGII…AAKG), 49–69 (LVLM…GCAI), 98–118 (HVLL…ALFT), 121–141 (LALL…SLYM), 145–165 (SVYG…VGYC), 176–196 (VILL…IAIF), 222–242 (IVLY…AGYT), 245–265 (AFMA…LKGY), and 277–297 (QVFG…ALDF).

It belongs to the UbiA prenyltransferase family. Protoheme IX farnesyltransferase subfamily.

It is found in the cell inner membrane. It catalyses the reaction heme b + (2E,6E)-farnesyl diphosphate + H2O = Fe(II)-heme o + diphosphate. The protein operates within porphyrin-containing compound metabolism; heme O biosynthesis; heme O from protoheme: step 1/1. Its function is as follows. Converts heme B (protoheme IX) to heme O by substitution of the vinyl group on carbon 2 of heme B porphyrin ring with a hydroxyethyl farnesyl side group. This chain is Protoheme IX farnesyltransferase 2, found in Shewanella sp. (strain MR-7).